The following is a 108-amino-acid chain: Thiosulfate sulfurtransferase GlpE (108 aa).

Residues 17-105 (QEKEAVLVDI…WQRQFPAEVA (89 aa)) enclose the Rhodanese domain. Residue cysteine 65 is the Cysteine persulfide intermediate of the active site.

The protein belongs to the GlpE family.

The protein localises to the cytoplasm. The catalysed reaction is thiosulfate + hydrogen cyanide = thiocyanate + sulfite + 2 H(+). It catalyses the reaction thiosulfate + [thioredoxin]-dithiol = [thioredoxin]-disulfide + hydrogen sulfide + sulfite + 2 H(+). Transferase that catalyzes the transfer of sulfur from thiosulfate to thiophilic acceptors such as cyanide or dithiols. May function in a CysM-independent thiosulfate assimilation pathway by catalyzing the conversion of thiosulfate to sulfite, which can then be used for L-cysteine biosynthesis. This Escherichia coli O45:K1 (strain S88 / ExPEC) protein is Thiosulfate sulfurtransferase GlpE.